Consider the following 628-residue polypeptide: MBT domain-containing protein 1 (628 aa).

A disordered region spans residues 1–31 (MFDGYDSCSEDTSSSSSSEESEEEVAPLPSN). Residues 45 to 80 (PDGKSGMATCEMCGMVGVRDAFYSKTKRFCSVSCSR) form an FCS-type zinc finger. Residues Cys-54, Cys-57, Cys-74, and Cys-78 each coordinate Zn(2+). The residue at position 115 (Lys-115) is an N6-acetyllysine. 4 MBT repeats span residues 141-245 (FSWG…LVPP), 253-350 (TNWK…IGHR), 351-456 (FKRS…LTPP), and 464-560 (FKWF…LQPP). 2 disordered regions span residues 560–590 (PASQSSRENQSASSKQKKKAKSQQYKGHKKM) and 606–628 (NFLQGASDQESNGSANFYIKQEP). A compositionally biased stretch (low complexity) spans 562–573 (SQSSRENQSASS). A compositionally biased stretch (basic residues) spans 574–590 (KQKKKAKSQQYKGHKKM). Polar residues predominate over residues 609–620 (QGASDQESNGSA).

In terms of assembly, monomer. Component of the NuA4 histone acetyltransferase complex. Interacts with EPC1; interaction is direct and promotes recruitment of MBTD1 into the NuA4 histone acetyltransferase complex.

Its subcellular location is the nucleus. The protein resides in the chromosome. Functionally, chromatin reader component of the NuA4 histone acetyltransferase complex, a multiprotein complex involved in transcriptional activation of select genes principally by acetylation of nucleosomal histones H4 and H2A. The NuA4 complex plays a direct role in repair of DNA double-strand breaks (DSBs) by promoting homologous recombination (HR). MBTD1 specifically recognizes and binds monomethylated and dimethylated 'Lys-20' on histone H4 (H4K20me1 and H4K20me2, respectively). In the NuA4 complex, MBTD1 promotes recruitment of the complex to H4K20me marks by competing with TP53BP1 for binding to H4K20me. Following recruitment to H4K20me at DNA breaks, the NuA4 complex catalyzes acetylation of 'Lys-15' on histone H2A (H2AK15), blocking the ubiquitination mark required for TP53BP1 localization at DNA breaks, thereby promoting homologous recombination (HR). In Homo sapiens (Human), this protein is MBT domain-containing protein 1.